An 856-amino-acid chain; its full sequence is Envelope glycoprotein gp150 (856 aa).

Residues 1–785 (MAEGFAANRQ…WIGNIPQYLK (785 aa)) lie on the Extracellular side of the membrane. N-linked (GlcNAc...) asparagine; by host glycosylation is found at N220, N258, N269, N274, N298, N330, N336, N342, N418, N422, N448, N481, N499, N518, N531, N548, and N551. Positions 616–636 (VMLALATVLSIAGAGTGATAI) are fusion peptide. Positions 643-693 (HQVLATHQEAIEKVTGALKINNLRLVTLEHQVLVIGLKVEAMEKFLYTAFA) form a coiled coil. The interval 662–680 (INNLRLVTLEHQVLVIGLK) is immunosuppression. N717, N721, N729, and N737 each carry an N-linked (GlcNAc...) asparagine; by host glycan. Residues 736–772 (YNQTKDLQQKFYEIIMDIEQNNVQGKTGIQQLQKWED) are a coiled coil. Residues 786–806 (GLLGGILGIGLGVLLLILCLP) form a helical membrane-spanning segment. The Cytoplasmic segment spans residues 807 to 856 (TLVDCIRNCIHKILGYTVIAMPEVEGEEIQPQMELRRNGRQCGMSEKEEE).

In terms of assembly, the mature envelope protein (Env) consists of a trimer of SU-TM heterodimers attached by noncovalent interactions or by a labile interchain disulfide bond. In terms of processing, specific enzymatic cleavages in vivo yield mature proteins. Envelope glycoproteins are synthesized as an inactive precursor that is N-glycosylated and processed likely by host cell furin or by a furin-like protease in the Golgi to yield the mature SU and TM proteins. The cleavage site between SU and TM requires the minimal sequence [KR]-X-[KR]-R.

Its subcellular location is the virion membrane. It is found in the host cell membrane. In terms of biological role, the surface protein (SU) attaches the virus to the host cell by binding to its receptor. This interaction triggers the refolding of the transmembrane protein (TM) and is thought to activate its fusogenic potential by unmasking its fusion peptide. Fusion occurs at the host cell plasma membrane. Functionally, the transmembrane protein (TM) acts as a class I viral fusion protein. Under the current model, the protein has at least 3 conformational states: pre-fusion native state, pre-hairpin intermediate state, and post-fusion hairpin state. During viral and target cell membrane fusion, the coiled coil regions (heptad repeats) assume a trimer-of-hairpins structure, positioning the fusion peptide in close proximity to the C-terminal region of the ectodomain. The formation of this structure appears to drive apposition and subsequent fusion of viral and target cell membranes. Membranes fusion leads to delivery of the nucleocapsid into the cytoplasm. This chain is Envelope glycoprotein gp150 (env), found in Felidae (cat family).